Reading from the N-terminus, the 236-residue chain is Probable metal transport system ATP-binding protein CT_416 (236 aa).

The ABC transporter domain maps to M5 to P236. ATP is bound at residue G39 to T46.

It belongs to the ABC transporter superfamily.

It is found in the cell inner membrane. Part of an ATP-driven transport system CT_415/CT_416/CT_417 for a metal. Probably responsible for energy coupling to the transport system. This chain is Probable metal transport system ATP-binding protein CT_416, found in Chlamydia trachomatis serovar D (strain ATCC VR-885 / DSM 19411 / UW-3/Cx).